Consider the following 583-residue polypeptide: Protein cps3 (583 aa).

C3H1-type zinc fingers lie at residues 35 to 62 and 64 to 91; these read SLQH…HDLE and ATEK…HVLP. Disordered regions lie at residues 318 to 346, 471 to 490, and 504 to 532; these read LGRP…NGST, KVSS…YNGT, and RQES…KNLG. Composition is skewed to polar residues over residues 323–334, 475–490, and 513–532; these read KSPSVPTSVGSN, NLNS…YNGT, and PSLN…KNLG.

The protein localises to the cytoplasm. In terms of biological role, responsible for supersensitivity to the spindle poison, isopropyl N-3-chlorophenyl carbamate. Has a role in meiosis. This chain is Protein cps3 (cps3), found in Schizosaccharomyces pombe (strain 972 / ATCC 24843) (Fission yeast).